Here is a 94-residue protein sequence, read N- to C-terminus: UPF0213 protein BH0048 (94 aa).

A GIY-YIG domain is found at 1 to 76; it reads MNHYVYILEC…KHLSRRKKEQ (76 aa).

This sequence belongs to the UPF0213 family.

The protein is UPF0213 protein BH0048 of Halalkalibacterium halodurans (strain ATCC BAA-125 / DSM 18197 / FERM 7344 / JCM 9153 / C-125) (Bacillus halodurans).